Here is a 281-residue protein sequence, read N- to C-terminus: MSRWLMQMLMLPLLLLPLGQAAPKDGVARLDPEAQQQLTTNPFQPGPEQLRRLRDYLKGLEKMEEDPEQMNREQVLLYLFALHDFDQNGQLDGLELLSMLTAALAPGAAHFPINPVILVVDMVLETQDLDGDGLMTPAELINFPGEAPKRAESLPPALQEPQPAGSQPLLANSPLQSETQQSLGTKEEITSQVEAKRALEPEQEAGHHIETKVDALSPEGEARGQAESEGDAPGPREDAERQVESKDNEGEAKDLPAETLETQNTPNVVEAHSIQLENDEI.

An N-terminal signal peptide occupies residues 1 to 21 (MSRWLMQMLMLPLLLLPLGQA). 2 consecutive EF-hand domains span residues 71-106 (NREQ…ALAP) and 115-150 (PVIL…APKR). Ca(2+)-binding residues include Asp-84, Asp-86, Asn-88, Gln-90, Glu-95, Asp-128, Asp-130, Asp-132, and Glu-139. Positions 146–281 (EAPKRAESLP…HSIQLENDEI (136 aa)) are disordered. The segment covering 169-184 (LLANSPLQSETQQSLG) has biased composition (polar residues). Basic and acidic residues predominate over residues 185–213 (TKEEITSQVEAKRALEPEQEAGHHIETKV). Phosphoserine is present on residues Ser-217 and Ser-228. Residues 234–256 (GPREDAERQVESKDNEGEAKDLP) show a composition bias toward basic and acidic residues.

In terms of processing, probably digested extracellularly by an unknown serine protease generating extremely hydrophobic bioactive peptides. As to expression, expressed predominantly in whole brain and kidney, with limited expression in heart, lung, liver, and skeletal muscle and no expression in spleen and testis. Also expressed in pituitary gland, adrenal gland, digestive tract, and reproductive organs.

It localises to the secreted. Mediates cell-cell adhesion in a calcium-dependent manner. Able to inhibit growth in several cell lines. The protein is Cell growth regulator with EF hand domain protein 1 of Rattus norvegicus (Rat).